Consider the following 813-residue polypeptide: DNA ligase (813 aa).

Residues 41–45 (DAEYD), 90–91 (SI), and E127 each bind NAD(+). The active-site N6-AMP-lysine intermediate is the K129. Positions 150, 189, 307, and 331 each coordinate NAD(+). C440, C443, C458, and C464 together coordinate Zn(2+). The BRCT domain maps to 729–813 (AEEGALSGKT…LLQNPPGDSA (85 aa)).

This sequence belongs to the NAD-dependent DNA ligase family. LigA subfamily. Requires Mg(2+) as cofactor. Mn(2+) is required as a cofactor.

It carries out the reaction NAD(+) + (deoxyribonucleotide)n-3'-hydroxyl + 5'-phospho-(deoxyribonucleotide)m = (deoxyribonucleotide)n+m + AMP + beta-nicotinamide D-nucleotide.. In terms of biological role, DNA ligase that catalyzes the formation of phosphodiester linkages between 5'-phosphoryl and 3'-hydroxyl groups in double-stranded DNA using NAD as a coenzyme and as the energy source for the reaction. It is essential for DNA replication and repair of damaged DNA. This chain is DNA ligase, found in Ralstonia nicotianae (strain ATCC BAA-1114 / GMI1000) (Ralstonia solanacearum).